The primary structure comprises 258 residues: Ubiquinone/menaquinone biosynthesis C-methyltransferase UbiE (258 aa).

Residues T83, D104, and 130–131 (DA) contribute to the S-adenosyl-L-methionine site.

It belongs to the class I-like SAM-binding methyltransferase superfamily. MenG/UbiE family.

It carries out the reaction a 2-demethylmenaquinol + S-adenosyl-L-methionine = a menaquinol + S-adenosyl-L-homocysteine + H(+). The enzyme catalyses a 2-methoxy-6-(all-trans-polyprenyl)benzene-1,4-diol + S-adenosyl-L-methionine = a 5-methoxy-2-methyl-3-(all-trans-polyprenyl)benzene-1,4-diol + S-adenosyl-L-homocysteine + H(+). Its pathway is quinol/quinone metabolism; menaquinone biosynthesis; menaquinol from 1,4-dihydroxy-2-naphthoate: step 2/2. The protein operates within cofactor biosynthesis; ubiquinone biosynthesis. Functionally, methyltransferase required for the conversion of demethylmenaquinol (DMKH2) to menaquinol (MKH2) and the conversion of 2-polyprenyl-6-methoxy-1,4-benzoquinol (DDMQH2) to 2-polyprenyl-3-methyl-6-methoxy-1,4-benzoquinol (DMQH2). In Bordetella bronchiseptica (strain ATCC BAA-588 / NCTC 13252 / RB50) (Alcaligenes bronchisepticus), this protein is Ubiquinone/menaquinone biosynthesis C-methyltransferase UbiE.